A 607-amino-acid polypeptide reads, in one-letter code: Hemagglutinin glycoprotein (607 aa).

The Intravirion portion of the chain corresponds to 1–38 (MFSHQDKVGAFYKNNARANSSKLSLVTDEVEERRSPWF). Residues 39–55 (LSILLILLVGILILLTI) traverse the membrane as a helical; Signal-anchor for type II membrane protein segment. Residues 56-607 (TGIRFHQVVK…IRFSCDRLDP (552 aa)) are Virion surface-facing. N-linked (GlcNAc...) asparagine; by host glycosylation is found at asparagine 149, asparagine 276, asparagine 391, asparagine 422, asparagine 456, and asparagine 587.

The protein belongs to the paramyxoviruses hemagglutinin-neuraminidase family. Non-sialidase subfamily.

The protein localises to the virion membrane. The protein resides in the host membrane. In terms of biological role, attaches the virus to cell receptors and thereby initiating infection. Binding of H protein to the receptor induces a conformational change that allows the F protein to trigger virion/cell membranes fusion. The polypeptide is Hemagglutinin glycoprotein (H) (Phocidae (true seals)).